Reading from the N-terminus, the 393-residue chain is Protein TsgA (393 aa).

Transmembrane regions (helical) follow at residues 11-31 (WISF…GMVM), 51-71 (FLNA…EIIP), 78-98 (FGFI…SLAL), 101-121 (AAMF…TFLI), 134-154 (LLFT…VAAF), 162-182 (WYWV…LTFG), 206-226 (IGVL…LGFI), 245-265 (ALVS…SFIL), 273-293 (ILTV…TGTQ), 298-318 (WFIL…ITLG), 332-352 (FILT…GPIV), and 361-381 (LLTA…LGFV).

This sequence belongs to the major facilitator superfamily. TsgA family.

It localises to the cell inner membrane. The chain is Protein TsgA from Salmonella schwarzengrund (strain CVM19633).